We begin with the raw amino-acid sequence, 344 residues long: Glycerol-3-phosphate dehydrogenase [NAD(P)+] (344 aa).

Positions 18, 19, 39, and 113 each coordinate NADPH. Residues K113, G142, and T144 each coordinate sn-glycerol 3-phosphate. Residue A146 coordinates NADPH. Residues K198, D251, S261, R262, and N263 each contribute to the sn-glycerol 3-phosphate site. The Proton acceptor role is filled by K198. Position 262 (R262) interacts with NADPH. Positions 286 and 288 each coordinate NADPH.

This sequence belongs to the NAD-dependent glycerol-3-phosphate dehydrogenase family.

The protein resides in the cytoplasm. It carries out the reaction sn-glycerol 3-phosphate + NAD(+) = dihydroxyacetone phosphate + NADH + H(+). It catalyses the reaction sn-glycerol 3-phosphate + NADP(+) = dihydroxyacetone phosphate + NADPH + H(+). Its pathway is membrane lipid metabolism; glycerophospholipid metabolism. Catalyzes the reduction of the glycolytic intermediate dihydroxyacetone phosphate (DHAP) to sn-glycerol 3-phosphate (G3P), the key precursor for phospholipid synthesis. The chain is Glycerol-3-phosphate dehydrogenase [NAD(P)+] from Blochmanniella pennsylvanica (strain BPEN).